A 243-amino-acid polypeptide reads, in one-letter code: Large ribosomal subunit protein uL30 (243 aa).

Residues 1 to 31 (MADKILTPESQLKKSKAQQKSAEQVAAERAA) are disordered. Over residues 18 to 28 (QQKSAEQVAAE) the composition is skewed to low complexity.

This sequence belongs to the universal ribosomal protein uL30 family.

The sequence is that of Large ribosomal subunit protein uL30 (RPL7) from Eremothecium gossypii (strain ATCC 10895 / CBS 109.51 / FGSC 9923 / NRRL Y-1056) (Yeast).